The primary structure comprises 65 residues: Large ribosomal subunit protein bL35 (65 aa).

The tract at residues 1–29 (MPKMKTHSGAKKRFKLTGSGKVKRQQANR) is disordered.

This sequence belongs to the bacterial ribosomal protein bL35 family.

The polypeptide is Large ribosomal subunit protein bL35 (Kocuria rhizophila (strain ATCC 9341 / DSM 348 / NBRC 103217 / DC2201)).